A 321-amino-acid polypeptide reads, in one-letter code: Probable arabinan endo-1,5-alpha-L-arabinosidase A (321 aa).

A signal peptide spans 1-19 (MYRLLSVASVPLLASLVHG). D34 acts as the Proton acceptor in catalysis. The active-site Proton donor is E200. N-linked (GlcNAc...) asparagine glycosylation is present at N295.

This sequence belongs to the glycosyl hydrolase 43 family.

It localises to the secreted. It carries out the reaction Endohydrolysis of (1-&gt;5)-alpha-arabinofuranosidic linkages in (1-&gt;5)-arabinans.. Its pathway is glycan metabolism; L-arabinan degradation. Endo-1,5-alpha-L-arabinanase involved in degradation of pectin. Its preferred substrate is linear 1,5-alpha-L-arabinan. The protein is Probable arabinan endo-1,5-alpha-L-arabinosidase A (abnA) of Aspergillus niger (strain ATCC MYA-4892 / CBS 513.88 / FGSC A1513).